The sequence spans 132 residues: Small ribosomal subunit protein uS8c (132 aa).

The protein belongs to the universal ribosomal protein uS8 family. Part of the 30S ribosomal subunit.

It localises to the plastid. The protein resides in the chloroplast. In terms of biological role, one of the primary rRNA binding proteins, it binds directly to 16S rRNA central domain where it helps coordinate assembly of the platform of the 30S subunit. This is Small ribosomal subunit protein uS8c (rps8) from Calycanthus floridus var. glaucus (Eastern sweetshrub).